Consider the following 1164-residue polypeptide: DNA-directed RNA polymerase 132 kDa polypeptide (1164 aa).

Belongs to the RNA polymerase beta chain family. The DNA-dependent RNA polymerase used for intermediate and late genes expression consists of eight subunits (147) kDa, (133) kDa, (35) kDa, (30) kDa, (22) kDa, (19) kDa, (18) kDa and (7) kDa totalling more than 500 kDa in mass. The same holoenzyme, with the addition of the transcription-specificity factor RAP94, is used for early gene expression.

The protein resides in the virion. It catalyses the reaction RNA(n) + a ribonucleoside 5'-triphosphate = RNA(n+1) + diphosphate. Part of the DNA-dependent RNA polymerase which catalyzes the transcription of viral DNA into RNA using the four ribonucleoside triphosphates as substrates. Responsible for the transcription of early, intermediate and late genes. DNA-dependent RNA polymerase associates with the early transcription factor (ETF), itself composed of D6 and A7, thereby allowing the early genes transcription. Late transcription, and probably also intermediate transcription, require newly synthesized RNA polymerase. This Cowpox virus (strain GRI-90 / Grishak) (CPV) protein is DNA-directed RNA polymerase 132 kDa polypeptide (RPO132).